A 255-amino-acid polypeptide reads, in one-letter code: NADPH-dependent FMN reductase ArsH (255 aa).

Residue 43–50 (SLRARSFS) participates in FMN binding.

This sequence belongs to the ArsH family. Homotetramer. Requires FMN as cofactor.

Functionally, has NADPH-dependent FMN reductase activity and very low azoreductase activity. No activity with NADH. This chain is NADPH-dependent FMN reductase ArsH, found in Shigella flexneri.